The sequence spans 484 residues: UDP-glucose:undecaprenyl-phosphate glucose-1-phosphate transferase (484 aa).

5 consecutive transmembrane segments (helical) span residues 37–57, 59–79, 93–113, 122–142, and 299–319; these read MVVASGLIAYRIVFGTWVPAA, YRVAIATTLLYSVICFALFPL, VVLGGAFGGVFALFAVHALIV, GWVGLWFVGGLVSLVAARTLL, and ILAVIALMGLWPLMLAIAVGV.

It belongs to the bacterial sugar transferase family.

It is found in the cell inner membrane. The catalysed reaction is di-trans,octa-cis-undecaprenyl phosphate + UDP-alpha-D-glucose = alpha-D-glucosyl di-trans,octa-cis-undecaprenyl diphosphate + UMP. It participates in glycan biosynthesis; xanthan biosynthesis. In terms of biological role, is the initiating enzyme for the synthesis of the exopolysaccharide xanthan. Catalyzes the transfer of the glucose-1-phosphate moiety from UDP-Glc onto the carrier lipid undecaprenyl phosphate (C55-P), forming a phosphoanhydride bond yielding to glucosyl-pyrophosphoryl-undecaprenol (Glc-PP-C55). This chain is UDP-glucose:undecaprenyl-phosphate glucose-1-phosphate transferase (gumD), found in Xanthomonas campestris pv. campestris.